Consider the following 186-residue polypeptide: Peptidyl-tRNA hydrolase (186 aa).

Y14 contributes to the tRNA binding site. H19 serves as the catalytic Proton acceptor. TRNA is bound by residues F64, N66, and N112.

Belongs to the PTH family. As to quaternary structure, monomer.

It is found in the cytoplasm. The enzyme catalyses an N-acyl-L-alpha-aminoacyl-tRNA + H2O = an N-acyl-L-amino acid + a tRNA + H(+). Its function is as follows. Hydrolyzes ribosome-free peptidyl-tRNAs (with 1 or more amino acids incorporated), which drop off the ribosome during protein synthesis, or as a result of ribosome stalling. Catalyzes the release of premature peptidyl moieties from peptidyl-tRNA molecules trapped in stalled 50S ribosomal subunits, and thus maintains levels of free tRNAs and 50S ribosomes. In Anaplasma marginale (strain St. Maries), this protein is Peptidyl-tRNA hydrolase.